The following is a 426-amino-acid chain: Serine hydroxymethyltransferase (426 aa).

Residues L118 and 122-124 (GHL) contribute to the (6S)-5,6,7,8-tetrahydrofolate site. K227 is subject to N6-(pyridoxal phosphate)lysine.

The protein belongs to the SHMT family. In terms of assembly, homodimer. It depends on pyridoxal 5'-phosphate as a cofactor.

It localises to the cytoplasm. The catalysed reaction is (6R)-5,10-methylene-5,6,7,8-tetrahydrofolate + glycine + H2O = (6S)-5,6,7,8-tetrahydrofolate + L-serine. Its pathway is one-carbon metabolism; tetrahydrofolate interconversion. The protein operates within amino-acid biosynthesis; glycine biosynthesis; glycine from L-serine: step 1/1. Its function is as follows. Catalyzes the reversible interconversion of serine and glycine with tetrahydrofolate (THF) serving as the one-carbon carrier. This reaction serves as the major source of one-carbon groups required for the biosynthesis of purines, thymidylate, methionine, and other important biomolecules. Also exhibits THF-independent aldolase activity toward beta-hydroxyamino acids, producing glycine and aldehydes, via a retro-aldol mechanism. The protein is Serine hydroxymethyltransferase of Mycobacterium leprae (strain Br4923).